We begin with the raw amino-acid sequence, 365 residues long: Ferrochelatase (365 aa).

Fe cation contacts are provided by histidine 211 and glutamate 292.

The protein belongs to the ferrochelatase family.

The protein resides in the cytoplasm. The catalysed reaction is heme b + 2 H(+) = protoporphyrin IX + Fe(2+). Its pathway is porphyrin-containing compound metabolism; protoheme biosynthesis; protoheme from protoporphyrin-IX: step 1/1. Its function is as follows. Catalyzes the ferrous insertion into protoporphyrin IX. The chain is Ferrochelatase from Aromatoleum aromaticum (strain DSM 19018 / LMG 30748 / EbN1) (Azoarcus sp. (strain EbN1)).